A 2601-amino-acid polypeptide reads, in one-letter code: Centrosomal protein of 295 kDa (2601 aa).

Residues 1 to 560 (MKRKVVNTHK…KKTQPTGVGI (560 aa)) are necessary for centriole targeting and microtubule association. At serine 14 the chain carries Phosphoserine. Coiled-coil stretches lie at residues 207–273 (KRPD…EDLA) and 500–552 (AARI…KRKK). Phosphoserine is present on residues serine 654 and serine 938. Residues 1008 to 1029 (PSADTKSGKIQEQHSSKSEKGL) form a disordered region. Positions 1013–1027 (KSGKIQEQHSSKSEK) are enriched in basic and acidic residues. Coiled coils occupy residues 1053 to 1082 (LHDS…VELL) and 1498 to 1544 (IQSH…VSSE). Positions 1558 to 1580 (ADSERTQKSFPTKSNDTLPSSHR) are disordered. The segment covering 1565 to 1577 (KSFPTKSNDTLPS) has biased composition (polar residues). Residue serine 1637 is modified to Phosphoserine. Residues 1728-1758 (QEKLLVQRQTALQQQIQKHEETLKDFFKDSQ) are a coiled coil. Composition is skewed to basic and acidic residues over residues 1795–1827 (RHAD…DLGR), 1985–2003 (FSEH…KEEE), and 2100–2112 (DNRD…DSSS). Disordered regions lie at residues 1795 to 1834 (RHAD…KPPV), 1979 to 2004 (LTDP…EEET), and 2085 to 2117 (HPDF…SHCA). The residue at position 2473 (threonine 2473) is a Phosphothreonine. The segment at 2478 to 2601 (SLQEAFIKRK…LEKLRAKNTC (124 aa)) is ALMS motif. Residues 2556–2581 (RLYNQLAEVKQQKEEKTKQEAYAQNR) adopt a coiled-coil conformation.

Interacts (via ALMS motif) with microtubules; this interaction is direct.

The protein resides in the cytoplasm. It localises to the cytoskeleton. It is found in the microtubule organizing center. The protein localises to the centrosome. Its subcellular location is the centriole. The protein resides in the spindle. Functionally, centriole-enriched microtubule-binding protein involved in centriole biogenesis. Essential for the generation of the distal portion of new-born centrioles in a CPAP- and CEP120-mediated elongation dependent manner during the cell cycle S/G2 phase after formation of the initiating cartwheel structure. Required for the recruitment of centriolar proteins, such as POC1B, POC5 and CEP135, into the distal portion of centrioles. Also required for centriole-to-centrosome conversion during mitotic progression, but is dispensable for cartwheel removal or centriole disengagement. Binds to and stabilizes centriolar microtubule. May be involved in ciliogenesis. This is Centrosomal protein of 295 kDa from Homo sapiens (Human).